The sequence spans 38 residues: Photosystem II reaction center protein L (38 aa).

The helical transmembrane segment at 17–37 threads the bilayer; that stretch reads SLYWGLLLIFVLAVLFSNYFF.

This sequence belongs to the PsbL family. PSII is composed of 1 copy each of membrane proteins PsbA, PsbB, PsbC, PsbD, PsbE, PsbF, PsbH, PsbI, PsbJ, PsbK, PsbL, PsbM, PsbT, PsbX, PsbY, PsbZ, Psb30/Ycf12, at least 3 peripheral proteins of the oxygen-evolving complex and a large number of cofactors. It forms dimeric complexes.

It is found in the plastid. Its subcellular location is the chloroplast thylakoid membrane. Functionally, one of the components of the core complex of photosystem II (PSII). PSII is a light-driven water:plastoquinone oxidoreductase that uses light energy to abstract electrons from H(2)O, generating O(2) and a proton gradient subsequently used for ATP formation. It consists of a core antenna complex that captures photons, and an electron transfer chain that converts photonic excitation into a charge separation. This subunit is found at the monomer-monomer interface and is required for correct PSII assembly and/or dimerization. The sequence is that of Photosystem II reaction center protein L from Oenothera argillicola (Appalachian evening primrose).